A 390-amino-acid polypeptide reads, in one-letter code: Methylthioribose-1-phosphate isomerase (390 aa).

Residue aspartate 263 is the Proton donor of the active site.

The protein belongs to the eIF-2B alpha/beta/delta subunits family. MtnA subfamily.

The protein resides in the cytoplasm. It is found in the nucleus. The catalysed reaction is 5-(methylsulfanyl)-alpha-D-ribose 1-phosphate = 5-(methylsulfanyl)-D-ribulose 1-phosphate. Its pathway is amino-acid biosynthesis; L-methionine biosynthesis via salvage pathway; L-methionine from S-methyl-5-thio-alpha-D-ribose 1-phosphate: step 1/6. Its function is as follows. Catalyzes the interconversion of methylthioribose-1-phosphate (MTR-1-P) into methylthioribulose-1-phosphate (MTRu-1-P). The chain is Methylthioribose-1-phosphate isomerase from Meyerozyma guilliermondii (strain ATCC 6260 / CBS 566 / DSM 6381 / JCM 1539 / NBRC 10279 / NRRL Y-324) (Yeast).